The sequence spans 336 residues: Holliday junction branch migration complex subunit RuvB (336 aa).

Residues 1–11 show a composition bias toward basic and acidic residues; that stretch reads MDDDKLLSGDK. Residues 1-21 form a disordered region; it reads MDDDKLLSGDKADDEEASLEK. The large ATPase domain (RuvB-L) stretch occupies residues 1–184; sequence MDDDKLLSGD…FGIVEHMAYY (184 aa). ATP-binding positions include leucine 23, arginine 24, glycine 65, lysine 68, threonine 69, threonine 70, 131–133, arginine 174, tyrosine 184, and arginine 221; that span reads EDF. Threonine 69 contacts Mg(2+). A small ATPAse domain (RuvB-S) region spans residues 185 to 255; that stretch reads EVADLEDIVK…IVARSLTYLR (71 aa). Residues 258-336 form a head domain (RuvB-H) region; it reads DAGLDETDNK…HLGFPYPENK (79 aa). Arginine 313 and arginine 318 together coordinate DNA.

It belongs to the RuvB family. Homohexamer. Forms an RuvA(8)-RuvB(12)-Holliday junction (HJ) complex. HJ DNA is sandwiched between 2 RuvA tetramers; dsDNA enters through RuvA and exits via RuvB. An RuvB hexamer assembles on each DNA strand where it exits the tetramer. Each RuvB hexamer is contacted by two RuvA subunits (via domain III) on 2 adjacent RuvB subunits; this complex drives branch migration. In the full resolvosome a probable DNA-RuvA(4)-RuvB(12)-RuvC(2) complex forms which resolves the HJ.

It localises to the cytoplasm. The catalysed reaction is ATP + H2O = ADP + phosphate + H(+). Its function is as follows. The RuvA-RuvB-RuvC complex processes Holliday junction (HJ) DNA during genetic recombination and DNA repair, while the RuvA-RuvB complex plays an important role in the rescue of blocked DNA replication forks via replication fork reversal (RFR). RuvA specifically binds to HJ cruciform DNA, conferring on it an open structure. The RuvB hexamer acts as an ATP-dependent pump, pulling dsDNA into and through the RuvAB complex. RuvB forms 2 homohexamers on either side of HJ DNA bound by 1 or 2 RuvA tetramers; 4 subunits per hexamer contact DNA at a time. Coordinated motions by a converter formed by DNA-disengaged RuvB subunits stimulates ATP hydrolysis and nucleotide exchange. Immobilization of the converter enables RuvB to convert the ATP-contained energy into a lever motion, pulling 2 nucleotides of DNA out of the RuvA tetramer per ATP hydrolyzed, thus driving DNA branch migration. The RuvB motors rotate together with the DNA substrate, which together with the progressing nucleotide cycle form the mechanistic basis for DNA recombination by continuous HJ branch migration. Branch migration allows RuvC to scan DNA until it finds its consensus sequence, where it cleaves and resolves cruciform DNA. This Lactiplantibacillus plantarum (strain ATCC BAA-793 / NCIMB 8826 / WCFS1) (Lactobacillus plantarum) protein is Holliday junction branch migration complex subunit RuvB.